The chain runs to 116 residues: MNQVQAFEQSMIPETAVPKFGAGDTLKVHVKVVEGTRERIQVFEGVCIGRMNAGLRSTFTVRKISFGEGVERTFPVYSPRVDKIEVIRHGDVRRAKLYYLRGRTGKASRIKEKRDW.

The protein belongs to the bacterial ribosomal protein bL19 family.

Its function is as follows. This protein is located at the 30S-50S ribosomal subunit interface and may play a role in the structure and function of the aminoacyl-tRNA binding site. This Magnetococcus marinus (strain ATCC BAA-1437 / JCM 17883 / MC-1) protein is Large ribosomal subunit protein bL19.